Here is an 852-residue protein sequence, read N- to C-terminus: Vacuolar protein sorting-associated protein 16 homolog (852 aa).

This sequence belongs to the VPS16 family. As to quaternary structure, probable core component of at least two putative endosomal tethering complexes, the homotypic fusion and vacuole protein sorting (HOPS) complex and the class C core vacuole/endosome tethering (CORVET) complex. Their common core is composed of the class C Vps proteins vps-11, vps-16 and vps-18, which in HOPS further associates with vps-33.1, vps-39 and vps-41 and in CORVET with vps-8 and vps-33.2.

It is found in the late endosome membrane. It localises to the lysosome membrane. In terms of biological role, plays a role in vesicle-mediated protein trafficking to lysosomal compartments including the endocytic membrane transport pathways. Believed to act as a core component of the putative HOPS and CORVET endosomal tethering complexes which are proposed to be involved in the rab-5-to-rab-7 endosome conversion probably implicating sand-1, and via binding SNAREs and SNARE complexes to mediate tethering and docking events during SNARE-mediated membrane fusion. The HOPS complex is proposed to be recruited to rab-7 on the late endosomal membrane and to regulate late endocytic, phagocytic and autophagic traffic towards lysosomes. Within the HOPS complex, contributes to the normal development of gut granules in the adult intestine. The CORVET complex is proposed to function as a rab-5 effector to mediate early endosome fusion probably in specific endosome subpopulations. Required for recruitment of vps-33.1 to the HOPS complex. Required for fusion of endosomes and autophagosomes with lysosomes; the function is dependent on its association with vps-33.1 but not vps-33.2. The chain is Vacuolar protein sorting-associated protein 16 homolog from Caenorhabditis elegans.